The chain runs to 654 residues: MRYLRPLNSCLRGIRSGSSFQPLAQSLNTRIRYSSSFAKTDMESINTTERLAGLRELMKKNKVDIYIVPSEDSHSSEYIAACDARREFISGFSGSAGCAVVTLEKAALATDGRYFNQASRQLDNNWLLLKQGLQDVPTWQEWAAEQSENGKVVGVDPTIMSASDARKLTEKIKKRGGNDLVAVEENLVDLVWGDSRPSRPKEPVKVLARKFAGKDVKTKLEDLRKELLKKKSSGLIVSMLDEIAWLFNLRGNDIPYNPVFFSYASVTSSSATLYVDSSKLSDECTAHLNENGVSVRDYSKIFGDAEVLSQSLDAEDTKVKKFLVSSRASWALKRALGGDAKVDEVRSPIGDAKSVKNETELEGMRACHVRDGAALIEYFAWLEHQLVVEKVKMDEVTAADRLEQLRSKQKNFVGLSFDTISSTGPNAAVIHYKPEPGNCSIIDPNAVYLCDSGAQYFDGTTDTTRTLHFGEPTEMEKKAYTLVLKGNIALDVAIFPKGTSGFALDVLARQFLWEEGLDYRHGTGHGVGSFLNVHEGPIGIGTRIQYSEVPLAPGNVISNEPGYYEDGSFGIRIENIIMVKEIETKHQFGEKPYLGFEHVTMVPYCRKLIDETLLTRKEKHWLNEYHADIYSKTKDFFKGDELTMSWLEREIEPL.

Mn(2+) contacts are provided by aspartate 451, aspartate 462, glutamate 560, and glutamate 574.

This sequence belongs to the peptidase M24B family. The cofactor is Mn(2+).

The enzyme catalyses Release of any N-terminal amino acid, including proline, that is linked to proline, even from a dipeptide or tripeptide.. Catalyzes the removal of a penultimate prolyl residue from the N-termini of peptides. This chain is Probable Xaa-Pro aminopeptidase P (ampp), found in Botryotinia fuckeliana (strain B05.10) (Noble rot fungus).